Reading from the N-terminus, the 183-residue chain is Inosine/xanthosine triphosphatase (183 aa).

Residue Asp75 coordinates Mg(2+). Position 75–76 (75–76 (DG)) interacts with substrate.

Belongs to the YjjX NTPase family. As to quaternary structure, homodimer. It depends on Mg(2+) as a cofactor. Mn(2+) serves as cofactor.

It catalyses the reaction XTP + H2O = XDP + phosphate + H(+). The catalysed reaction is ITP + H2O = IDP + phosphate + H(+). In terms of biological role, phosphatase that hydrolyzes non-canonical purine nucleotides such as XTP and ITP to their respective diphosphate derivatives. Probably excludes non-canonical purines from DNA/RNA precursor pool, thus preventing their incorporation into DNA/RNA and avoiding chromosomal lesions. The chain is Inosine/xanthosine triphosphatase from Vibrio vulnificus (strain YJ016).